The primary structure comprises 479 residues: Protoheme IX farnesyltransferase (479 aa).

The tract at residues 1–207 (MAEQTATTTS…AYIRLTKPRL (207 aa)) is unknown. 4 helical membrane passes run 20 to 40 (LLAGTAMGVYLLVLVGVTTAV), 64 to 84 (IGWLAVGHRVVAVIIGICAVV), 98 to 118 (VLITVAVGSFLYPIQAAVGAV), and 128 to 148 (LSVIHLIGGLSIFLTLAIALA). The segment covering 155 to 164 (TGDPTETQTT) has biased composition (low complexity). Residues 155–186 (TGDPTETQTTPSKPEPDQDLPPASEYDPDLPA) form a disordered region. The next 9 membrane-spanning stretches (helical) occupy residues 207-227 (LMWLLCLVASAGMTLGATTTG), 231-251 (PGIALATLGGGVLSIGASGTF), 271-291 (LATDLVPVWNAIAFGILLTVI), 303-322 (AAILGGVAIVFYSVVYTLLL), 324-344 (PNTVQNTVIGGAAGALPALIG), 345-365 (WVAVTGDIGFGGLALATVIFL), 402-422 (HVIWWLALTLVAAGGLATIEA), 423-443 (LGIVYAVASIVFGAVFLYFAI), and 459-479 (HASNAYLGAVLIAIVFDTLVI). The segment at 208 to 476 (MWLLCLVASA…AVLIAIVFDT (269 aa)) is protoheme IX prenyltransferase.

It in the C-terminal section; belongs to the UbiA prenyltransferase family. Protoheme IX farnesyltransferase subfamily.

The protein localises to the cell membrane. It catalyses the reaction heme b + (2E,6E)-farnesyl diphosphate + H2O = Fe(II)-heme o + diphosphate. Its pathway is porphyrin-containing compound metabolism; heme O biosynthesis; heme O from protoheme: step 1/1. Functionally, converts heme B (protoheme IX) to heme O by substitution of the vinyl group on carbon 2 of heme B porphyrin ring with a hydroxyethyl farnesyl side group. This chain is Protoheme IX farnesyltransferase (ctaB), found in Haloquadratum walsbyi (strain DSM 16790 / HBSQ001).